We begin with the raw amino-acid sequence, 388 residues long: MRYLTAGESHGPSLTAIIEGIPAGLTLHPADIDHELQRRQGGYGRGARMSIETDRVQISSGVRHGKTTGAPITLTVINKDHQKWLDVMAVGDIEETLKLKRRVKHPRPGHADLVGGIKYHFNDLRDALERSSARETTMRVAVGAVAKRILAELGIDMLHHILIFGGITITIPSKLSFRELQERALHSELSIVNPKQEEEIKTYIDKIKKEGDTIGGIIETIVQGVPAGLGSYVQWDKKLDAKLAQAVLSINAFKGVEFGVGFDMGFQKGSQVMDEITWTPTQGYGRQTNHLGGFEGGMTTGQPIVVKGVMKPIPTLYKPLMSVDIDSHEPYKATVERSDPTALPAAGVIMENVVATVLAKEILETFSSTTMSELQKAFSDYRAYVKQF.

The NADP(+) site is built by arginine 39 and arginine 45. Residues 130 to 132 (RSS), 251 to 252 (NA), glycine 296, 311 to 315 (KPIPT), and arginine 337 contribute to the FMN site.

The protein belongs to the chorismate synthase family. In terms of assembly, homotetramer. The cofactor is FMNH2.

The catalysed reaction is 5-O-(1-carboxyvinyl)-3-phosphoshikimate = chorismate + phosphate. Its pathway is metabolic intermediate biosynthesis; chorismate biosynthesis; chorismate from D-erythrose 4-phosphate and phosphoenolpyruvate: step 7/7. Its function is as follows. Catalyzes the anti-1,4-elimination of the C-3 phosphate and the C-6 proR hydrogen from 5-enolpyruvylshikimate-3-phosphate (EPSP) to yield chorismate, which is the branch point compound that serves as the starting substrate for the three terminal pathways of aromatic amino acid biosynthesis. This reaction introduces a second double bond into the aromatic ring system. This chain is Chorismate synthase, found in Streptococcus pyogenes serotype M49 (strain NZ131).